Here is a 406-residue protein sequence, read N- to C-terminus: MTLDVGPEDELPDWAAAKEFYQKYDPKDVIGRGVSSVVRRCVHRATGQEFAVKIMEVTAERLSPEQLEEVREATRRETHILRQVAGHPHIITLIDSYESSSFMFLVFDLMRKGELFDYLTEKVALSEKETRSIMRSLLEAVSFLHNNNIVHRDLKPENILLDDNMQIRLSDFGFSCHLEPGEKLRELCGTPGYLAPEILKCSMDETHPGYGKEVDLWACGVILFTLLAGSPPFWHRRQILMLRMIMEGQYQFSSPEWDDRSDTVKDLISRLLQVDPVERLTAEQALQHPFFERCEGSQAWNLTPRQRFRVAVWTVLAAGRVALSAHRIRPLTKSALLRDPYALRPVRRLIDNCAFRLYGHWVKKGEQQNRAALFQHRPPGPFPMMGPEEEGDSATIAEDEAMLVLG.

Positions 24–291 constitute a Protein kinase domain; sequence YDPKDVIGRG…AEQALQHPFF (268 aa). ATP is bound by residues 30 to 38 and K53; that span reads IGRGVSSVV. D153 (proton acceptor) is an active-site residue. The tract at residues 306–330 is calmodulin-binding (domain-N); the sequence is QRFRVAVWTVLAAGRVALSAHRIRP. The segment at 346 to 370 is calmodulin-binding (domain-C); the sequence is VRRLIDNCAFRLYGHWVKKGEQQNR.

This sequence belongs to the protein kinase superfamily. CAMK Ser/Thr protein kinase family. In terms of assembly, hexadecamer of 4 heterotetramers, each composed of alpha, beta, gamma, and delta subunits. Alpha (PHKA1 or PHKA2) and beta (PHKB) are regulatory subunits, gamma (PHKG1 or PHKG2) is the catalytic subunit, and delta is calmodulin.

The catalysed reaction is 2 ATP + phosphorylase b = 2 ADP + phosphorylase a.. Functionally, catalytic subunit of the phosphorylase b kinase (PHK), which mediates the neural and hormonal regulation of glycogen breakdown (glycogenolysis) by phosphorylating and thereby activating glycogen phosphorylase. May regulate glycogeneolysis in the testis. In vitro, phosphorylates PYGM. The sequence is that of Phosphorylase b kinase gamma catalytic chain, liver/testis isoform (PHKG2) from Bos taurus (Bovine).